The chain runs to 37 residues: Large ribosomal subunit protein bL36 (37 aa).

This sequence belongs to the bacterial ribosomal protein bL36 family.

This is Large ribosomal subunit protein bL36 from Salinispora arenicola (strain CNS-205).